Consider the following 316-residue polypeptide: MPKNMSPICPVCGQENDAANRYCSFCGTRFNSSLPSMDLFQAQTVQAPAPEQMVFSGNGQDLPSLTNHPFWGAIPVLGLLTVLPLGLFIFGMAIDANDWPYAALLVFLLFLFTLLIFLGQLWGNVSQAREFILSERPLILWRYSPDEWQQLRQAQFSESAEDMQEMAGCAVPFFAGVGTLLGTVLGSVEGFVGAVPGAAIGAMAGYIFGKILVPIATGLNQSTNRELYRTDLPVWVVLAPGEIYYNRQYFRADTIGDRLEGITLDEGALTWLRIETFAPRGSITASFDGNILVPHRMLATVKAVLPQLQQFISGED.

4 helical membrane-spanning segments follow: residues isoleucine 74–isoleucine 94, tryptophan 99–glycine 119, methionine 166–glycine 186, and valine 188–phenylalanine 208.

It is found in the cell membrane. This is an uncharacterized protein from Synechocystis sp. (strain ATCC 27184 / PCC 6803 / Kazusa).